The chain runs to 284 residues: Polyamine aminopropyltransferase (284 aa).

The PABS domain occupies 6–242 (KGWFTEVCKE…GWWSATLAGH (237 aa)). Glutamine 36 serves as a coordination point for S-methyl-5'-thioadenosine. Histidine 67 and aspartate 91 together coordinate spermidine. S-methyl-5'-thioadenosine is bound by residues glutamate 111 and 142-143 (DG). Residue aspartate 161 is the Proton acceptor of the active site. A spermidine-binding site is contributed by 161–164 (DSTD).

Belongs to the spermidine/spermine synthase family. As to quaternary structure, homodimer or homotetramer.

Its subcellular location is the cytoplasm. It carries out the reaction S-adenosyl 3-(methylsulfanyl)propylamine + putrescine = S-methyl-5'-thioadenosine + spermidine + H(+). It participates in amine and polyamine biosynthesis; spermidine biosynthesis; spermidine from putrescine: step 1/1. Functionally, catalyzes the irreversible transfer of a propylamine group from the amino donor S-adenosylmethioninamine (decarboxy-AdoMet) to putrescine (1,4-diaminobutane) to yield spermidine. In Nitrosococcus oceani (strain ATCC 19707 / BCRC 17464 / JCM 30415 / NCIMB 11848 / C-107), this protein is Polyamine aminopropyltransferase.